The sequence spans 400 residues: Transposase for insertion sequence element ISRM3 (400 aa).

The protein belongs to the transposase mutator family.

Required for the transposition of the insertion element. This chain is Transposase for insertion sequence element ISRM3, found in Rhizobium meliloti (strain 1021) (Ensifer meliloti).